The sequence spans 105 residues: Heat shock protein HspQ (105 aa).

The protein belongs to the HspQ family.

The protein localises to the cytoplasm. Its function is as follows. Involved in the degradation of certain denaturated proteins, including DnaA, during heat shock stress. This chain is Heat shock protein HspQ, found in Blochmanniella floridana.